The following is a 387-amino-acid chain: S-adenosylmethionine synthase (387 aa).

Glutamate 8 contributes to the Mg(2+) binding site. Histidine 14 is a binding site for ATP. A K(+)-binding site is contributed by glutamate 42. L-methionine is bound by residues glutamate 55 and glutamine 98. ATP contacts are provided by residues 166–168, 234–237, aspartate 245, 251–252, alanine 268, lysine 272, and lysine 276; these read DGK, SGRF, and RK. L-methionine is bound at residue aspartate 245. Residue lysine 276 coordinates L-methionine.

It belongs to the AdoMet synthase family. As to quaternary structure, homotetramer. It depends on Mn(2+) as a cofactor. Requires Mg(2+) as cofactor. The cofactor is Co(2+). K(+) serves as cofactor.

The protein resides in the cytoplasm. It catalyses the reaction L-methionine + ATP + H2O = S-adenosyl-L-methionine + phosphate + diphosphate. The protein operates within amino-acid biosynthesis; S-adenosyl-L-methionine biosynthesis; S-adenosyl-L-methionine from L-methionine: step 1/1. Functionally, catalyzes the formation of S-adenosylmethionine from methionine and ATP. The reaction comprises two steps that are both catalyzed by the same enzyme: formation of S-adenosylmethionine (AdoMet) and triphosphate, and subsequent hydrolysis of the triphosphate. The polypeptide is S-adenosylmethionine synthase (METK-1) (Ostreococcus lucimarinus (strain CCE9901)).